A 400-amino-acid chain; its full sequence is uncharacterized protein (400 aa).

36–43 contributes to the ATP binding site; that stretch reads GSINSGKT.

It belongs to the archaeal ATPase family.

This is an uncharacterized protein from Methanocaldococcus jannaschii (strain ATCC 43067 / DSM 2661 / JAL-1 / JCM 10045 / NBRC 100440) (Methanococcus jannaschii).